Consider the following 366-residue polypeptide: tRNA-specific 2-thiouridylase MnmA (366 aa).

ATP is bound by residues 6-13 and Met32; that span reads GLSGGVDS. Cys96 serves as the catalytic Nucleophile. An intrachain disulfide couples Cys96 to Cys196. ATP is bound at residue Gly120. Residues 146-148 form an interaction with tRNA region; it reads KDQ. Residue Cys196 is the Cysteine persulfide intermediate of the active site. The tract at residues 302-303 is interaction with tRNA; sequence RY.

It belongs to the MnmA/TRMU family.

It localises to the cytoplasm. It carries out the reaction S-sulfanyl-L-cysteinyl-[protein] + uridine(34) in tRNA + AH2 + ATP = 2-thiouridine(34) in tRNA + L-cysteinyl-[protein] + A + AMP + diphosphate + H(+). Catalyzes the 2-thiolation of uridine at the wobble position (U34) of tRNA, leading to the formation of s(2)U34. This is tRNA-specific 2-thiouridylase MnmA from Treponema denticola (strain ATCC 35405 / DSM 14222 / CIP 103919 / JCM 8153 / KCTC 15104).